The primary structure comprises 2052 residues: Unconventional myosin-X (2052 aa).

The residue at position 1 (Met-1) is an N-acetylmethionine. Residues 63–739 (EGVDDMATLT…LEQKLEKRQE (677 aa)) enclose the Myosin motor domain. ATP-binding positions include Asn-104, Tyr-113, 160–165 (GAGKTE), and Asn-215. The interval 619–641 (LHSLMATLSASNPFFVRCIKPNM) is actin-binding. IQ domains are found at residues 742-763 (VTRA…KQYK), 764-787 (KVLD…RFLH), and 788-817 (LKKA…EKRA). Residues 814 to 884 (EKRAEEEKRK…LSRELEKQKE (71 aa)) form an SAH region. Residues 819-843 (EEKRKREEEEKRKREEEERERERER) are disordered. Residues 885-935 (NKQVEEILRLEKEIEDLQRMKERQELSLTEASLQKLQQLRDEELRRLEDEA) adopt a coiled-coil conformation. Phosphoserine occurs at positions 963 and 966. Residues 964–1093 (VGSGCTGEQG…DYDQDDYEDG (130 aa)) form a disordered region. Residues 988 to 1003 (PEEEEVDEGFEADDDA) are compositionally biased toward acidic residues. Polar residues predominate over residues 1040 to 1049 (VVPTSPSADS). Positions 1081-1092 (GDYDYDQDDYED) are enriched in acidic residues. Thr-1152 carries the post-translational modification Phosphothreonine. PH domains follow at residues 1206–1304 (EALK…QVHA) and 1386–1491 (EFIV…NVTD). The region spanning 1541-1689 (LPYGDINLNL…PSRDEIEALI (149 aa)) is the MyTH4 domain. The region spanning 1694-2038 (MTSTVHCHGG…AYISMIVKKR (345 aa)) is the FERM domain.

The protein belongs to the TRAFAC class myosin-kinesin ATPase superfamily. Myosin family. In terms of assembly, monomer, when in an inactive conformation in the cytosol. Homodimer in its active, membrane-bound conformation; antiparallel coiled coil-mediated dimer formation. Interacts with ECPAS. Interacts with NEO 1. Interacts with VASP. Interacts with DCC and ITGB5; the presence of DCC inhibits ITGB5 binding. Interacts with tubulin; ITGB5 or DCC binding inhibits tubulin binding. Interacts strongly with CALM3 and weakly with CALM, the CALM3 interaction is essential for function in filopodial extension and motility. Interacts with ITGB1, ITGB3 and ITGB5. In terms of tissue distribution, detected in kidney, testis, liver, kidney, cerebellum and brain cortex (at protein level).

The protein resides in the cytoplasm. The protein localises to the cytosol. It localises to the cell projection. It is found in the lamellipodium. Its subcellular location is the ruffle. The protein resides in the cytoskeleton. The protein localises to the filopodium tip. It localises to the cell cortex. It is found in the filopodium membrane. In terms of biological role, myosins are actin-based motor molecules with ATPase activity. Unconventional myosins serve in intracellular movements. MYO10 binds to actin filaments and actin bundles and functions as a plus end-directed motor. Moves with higher velocity and takes larger steps on actin bundles than on single actin filaments. The tail domain binds to membranous compartments containing phosphatidylinositol 3,4,5-trisphosphate, which are then moved relative to actin filaments. Regulates cell shape, cell spreading and cell adhesion. Stimulates the formation and elongation of filopodia. In hippocampal neurons it induces the formation of dendritic filopodia by trafficking the actin-remodeling protein VASP to the tips of filopodia, where it promotes actin elongation. Plays a role in formation of the podosome belt in osteoclasts. The protein is Unconventional myosin-X (MYO10) of Bos taurus (Bovine).